The following is a 149-amino-acid chain: Gamma-glutamylaminecyclotransferase (149 aa).

7-10 contributes to the substrate binding site; the sequence is YGTL. Catalysis depends on Glu82, which acts as the Proton acceptor.

The protein belongs to the gamma-glutamylcyclotransferase family. In terms of assembly, monomer.

It catalyses the reaction epsilon-(gamma-L-glutamyl)-L-lysine = 5-oxo-L-proline + L-lysine. Its function is as follows. Contributes to degradation of proteins cross-linked by transglutaminases by degrading the cross-link between a lysine and a glutamic acid residue. Catalyzes the formation of 5-oxo-L-proline from L-gamma-glutamyl-L-epsilon-lysine. Inactive with L-gamma-glutamyl-alpha-amino acid substrates such as L-gamma-glutamyl-L-alpha-cysteine and L-gamma-glutamyl-L-alpha-alanine. The protein is Gamma-glutamylaminecyclotransferase (Ggact) of Rattus norvegicus (Rat).